Here is a 230-residue protein sequence, read N- to C-terminus: Cytidylate kinase (230 aa).

ATP is bound at residue 12 to 20 (GPSGAGKGT).

The protein belongs to the cytidylate kinase family. Type 1 subfamily.

The protein resides in the cytoplasm. The enzyme catalyses CMP + ATP = CDP + ADP. It carries out the reaction dCMP + ATP = dCDP + ADP. The polypeptide is Cytidylate kinase (Shewanella putrefaciens (strain CN-32 / ATCC BAA-453)).